The chain runs to 443 residues: ATP-dependent protease ATPase subunit HslU (443 aa).

ATP contacts are provided by residues Ile20, 62–67, Asp255, Glu321, and Arg393; that span reads GVGKTE.

It belongs to the ClpX chaperone family. HslU subfamily. A double ring-shaped homohexamer of HslV is capped on each side by a ring-shaped HslU homohexamer. The assembly of the HslU/HslV complex is dependent on binding of ATP.

It is found in the cytoplasm. Functionally, ATPase subunit of a proteasome-like degradation complex; this subunit has chaperone activity. The binding of ATP and its subsequent hydrolysis by HslU are essential for unfolding of protein substrates subsequently hydrolyzed by HslV. HslU recognizes the N-terminal part of its protein substrates and unfolds these before they are guided to HslV for hydrolysis. This Helicobacter pylori (strain Shi470) protein is ATP-dependent protease ATPase subunit HslU.